Here is a 407-residue protein sequence, read N- to C-terminus: Phospholipase A1-II 7 (407 aa).

Ser230 functions as the Acyl-ester intermediate in the catalytic mechanism. Catalysis depends on charge relay system residues Ser230, Asp299, and His336.

It belongs to the AB hydrolase superfamily. Lipase family.

The protein resides in the cytoplasm. Its function is as follows. Acylhydrolase that catalyzes the hydrolysis of phospholipids at the sn-1 position. This Oryza sativa subsp. indica (Rice) protein is Phospholipase A1-II 7.